Consider the following 327-residue polypeptide: Immediate early response gene 5 protein (327 aa).

Disordered regions lie at residues 59–166 and 227–313; these read GPAG…GVFP and GPAG…DKPV. Positions 71-84 are enriched in low complexity; sequence QPGEPAAGPPAGWG. The segment covering 253–262 has biased composition (acidic residues); sequence GEDDDAEEME. A compositionally biased stretch (polar residues) spans 265-278; the sequence is NVANLISIFGSSFS.

It belongs to the IER family. As to quaternary structure, monomer. Homodimer. Associates with the catalytic subunit of protein phosphatase PP2A. Interacts (via N- and C-terminal regions) with PPP2R2B. Interacts with PPP2R2A, PPP2R2C and PPP2R2D. Interacts (via N-terminus) with RPS6KB1. Interacts (via central region) with HSF1; this interaction promotes PPP2CA-induced HSF1 dephosphorylation, leading to enhanced HSF1 transcriptional activity. As to expression, expressed in acute myeloid leukemia (AML) cells.

It is found in the nucleus. Its subcellular location is the cytoplasm. In terms of biological role, plays a role as a transcription factor. Mediates positive transcriptional regulation of several chaperone genes during the heat shock response in a HSF1-dependent manner. Mediates negative transcriptional regulation of CDC25B expression. Plays a role in the dephosphorylation of the heat shock factor HSF1 and ribosomal protein S6 kinase (S6K) by the protein phosphatase PP2A. Involved in the regulation of cell proliferation and resistance to thermal stress. Involved in the cell cycle checkpoint and survival in response to ionizing radiation. Associates with chromatin to the CDC25B promoter. The chain is Immediate early response gene 5 protein (IER5) from Homo sapiens (Human).